Here is a 403-residue protein sequence, read N- to C-terminus: MAQNKPVKKIVLAYSGGLDTSVILTWLKDTYGCEVIAFTADIGQKEELSGLEEKGIKTGASKVYIQDLRLEFARDFIFPAIQGNAIYEMRYLLGTSLARPLIAKAMVEVAEKEGADAFAHGATGKGNDQVRFELGVKSLAPEKTIIAPWRIWSFGGRSDLIEYAKSKGIPVPVTAEKPYSMDRNLMHISYEGGILEDPYKEPDEKMFLLTTSPEKAPDAPEYLELDFEEGNCVAINGKKMNPLEIMETLNTIAGKHGVGRVDIVENRLVGIKSRGVYETPGGTILFLAHRDLESITIDRDTQHHKDKLSIEFAELIYNGHWFSSRMKAVRAFITETQRYVSGTVRIKLYKGVCSVVGRKSQVSLYNPEMATFEKEELYNQKDAEGFINIYGLPAQETARLRKK.

Residues 13-21 (AYSGGLDTS) and Ala-40 each bind ATP. The L-citrulline site is built by Tyr-91 and Ser-96. Residue Gly-121 coordinates ATP. Thr-123, Asn-127, and Asp-128 together coordinate L-aspartate. Asn-127 is a binding site for L-citrulline. 5 residues coordinate L-citrulline: Arg-131, Ser-180, Ser-189, Glu-265, and Tyr-277.

The protein belongs to the argininosuccinate synthase family. Type 1 subfamily. As to quaternary structure, homotetramer.

The protein localises to the cytoplasm. It catalyses the reaction L-citrulline + L-aspartate + ATP = 2-(N(omega)-L-arginino)succinate + AMP + diphosphate + H(+). It functions in the pathway amino-acid biosynthesis; L-arginine biosynthesis; L-arginine from L-ornithine and carbamoyl phosphate: step 2/3. The polypeptide is Argininosuccinate synthase (Leptospira interrogans serogroup Icterohaemorrhagiae serovar Lai (strain 56601)).